The sequence spans 363 residues: Oxygen-dependent coproporphyrinogen-III oxidase (363 aa).

Serine 119 contacts substrate. Positions 123 and 133 each coordinate a divalent metal cation. Catalysis depends on histidine 133, which acts as the Proton donor. 135–137 (NYR) contributes to the substrate binding site. Residues histidine 167 and histidine 197 each contribute to the a divalent metal cation site. Positions 287 to 322 (YVEFNLVWDRGTIFGLQTNGRTESILMSLPPLVRWE) are important for dimerization.

Belongs to the aerobic coproporphyrinogen-III oxidase family. As to quaternary structure, homodimer. The cofactor is a divalent metal cation.

It is found in the cytoplasm. The enzyme catalyses coproporphyrinogen III + O2 + 2 H(+) = protoporphyrinogen IX + 2 CO2 + 2 H2O. The protein operates within porphyrin-containing compound metabolism; protoporphyrin-IX biosynthesis; protoporphyrinogen-IX from coproporphyrinogen-III (O2 route): step 1/1. In terms of biological role, involved in the heme and chlorophyll biosynthesis. Catalyzes the aerobic oxidative decarboxylation of propionate groups of rings A and B of coproporphyrinogen-III to yield the vinyl groups in protoporphyrinogen-IX. The sequence is that of Oxygen-dependent coproporphyrinogen-III oxidase from Parasynechococcus marenigrum (strain WH8102).